The chain runs to 84 residues: MKLTCVLVVLLLVLPFGDLITTSNTEDNKRGATPWQNSLKARGVCSTPEGSCVHNGCICQNAPCCHPSGCNWVNVCPGFLWDKN.

The N-terminal stretch at 1-19 is a signal peptide; it reads MKLTCVLVVLLLVLPFGDL. Residues 20–42 constitute a propeptide that is removed on maturation; sequence ITTSNTEDNKRGATPWQNSLKAR. 4 cysteine pairs are disulfide-bonded: cysteine 45/cysteine 57, cysteine 52/cysteine 65, cysteine 59/cysteine 70, and cysteine 64/cysteine 76. Tryptophan 72 carries the 6'-bromotryptophan modification. 4-hydroxyproline is present on proline 77. Position 81 is a 6'-bromotryptophan (tryptophan 81).

This sequence belongs to the conotoxin O1 superfamily. Expressed by the venom duct.

It is found in the secreted. In terms of biological role, mu-conotoxins block voltage-gated sodium channels. This toxin reversibly blocks voltage-gated sodium channel in cephalopods, with no alteration in the voltage dependence of sodium conductance or on the kinetics of inactivation. This chain is Mu-conotoxin-like Cal 12.2b, found in Californiconus californicus (California cone).